We begin with the raw amino-acid sequence, 166 residues long: Ribosome maturation factor RimM (166 aa).

A PRC barrel domain is found at 91 to 163 (EDEFYEFQLI…KMQITPPEGW (73 aa)).

This sequence belongs to the RimM family. As to quaternary structure, binds ribosomal protein uS19.

It localises to the cytoplasm. Its function is as follows. An accessory protein needed during the final step in the assembly of 30S ribosomal subunit, possibly for assembly of the head region. Essential for efficient processing of 16S rRNA. May be needed both before and after RbfA during the maturation of 16S rRNA. It has affinity for free ribosomal 30S subunits but not for 70S ribosomes. The sequence is that of Ribosome maturation factor RimM from Sulfurihydrogenibium sp. (strain YO3AOP1).